We begin with the raw amino-acid sequence, 311 residues long: Mycinamicin-resistance protein MyrB (311 aa).

Residues N27, L29, G54, E75, and D98 each contribute to the S-adenosyl-L-methionine site. Positions P272–A311 are disordered. Positions P293 to P302 are enriched in low complexity.

This sequence belongs to the class I-like SAM-binding methyltransferase superfamily. rRNA adenine N(6)-methyltransferase family.

Confers resistance to macrolide, lincosamide and streptogramin B antibiotics. This is Mycinamicin-resistance protein MyrB (myrB) from Micromonospora griseorubida.